Consider the following 524-residue polypeptide: Cytochrome P450 monooxygenase patH (524 aa).

Residues 1 to 4 (MEPF) are Cytoplasmic-facing. A helical transmembrane segment spans residues 5-22 (LLLLLVLLPAIVLVRYAF). The Lumenal segment spans residues 23–524 (TYGHRTSTMP…ADVFSRFTEG (502 aa)). Residue Asn266 is glycosylated (N-linked (GlcNAc...) asparagine). Position 442 (Cys442) interacts with heme.

This sequence belongs to the cytochrome P450 family. It depends on heme as a cofactor.

It localises to the endoplasmic reticulum membrane. The enzyme catalyses 3-methylphenol + reduced [NADPH--hemoprotein reductase] + O2 = 3-hydroxybenzyl alcohol + oxidized [NADPH--hemoprotein reductase] + H2O + H(+). It functions in the pathway mycotoxin biosynthesis; patulin biosynthesis. Cytochrome P450 monooxygenase; part of the gene cluster that mediates the biosynthesis of patulin, an acetate-derived tetraketide mycotoxin produced by several fungal species that shows antimicrobial properties against several bacteria. PatH catalyzes the conversion of m-cresol into m-hydroxybenzyl alcohol. The pathway begins with the synthesis of 6-methylsalicylic acid by the polyketide synthase (PKS) patK via condensation of acetate and malonate units. The 6-methylsalicylic acid decarboxylase patG then catalyzes the decarboxylation of 6-methylsalicylic acid to yield m-cresol (also known as 3-methylphenol). These first reactions occur in the cytosol. The intermediate m-cresol is then transported into the endoplasmic reticulum where the cytochrome P450 monooxygenase patH converts it to m-hydroxybenzyl alcohol, which is further converted to gentisyl alcohol by the cytochrome P450 monooxygenase patI. The oxidoreductases patJ and patO further convert gentisyl alcohol to isoepoxydon in the vacuole. PatN catalyzes then the transformation of isoepoxydon into phyllostine. The cluster protein patF is responsible for the conversion from phyllostine to neopatulin whereas the alcohol dehydrogenase patD converts neopatulin to E-ascladiol. The steps between isoepoxydon and E-ascladiol occur in the cytosol, and E-ascladiol is probably secreted to the extracellular space by one of the cluster-specific transporters patC or patM. Finally, the secreted patulin synthase patE catalyzes the conversion of E-ascladiol to patulin. The protein is Cytochrome P450 monooxygenase patH of Penicillium expansum (Blue mold rot fungus).